We begin with the raw amino-acid sequence, 102 residues long: MNINIILYSSRIQQGGLNMSNETFNRVSEILRHIMEDNSVPRNIRRAAEESNEILNNPDEDSTVRASTVISILDEISNDPNIPIHARTLVWEILSELESIRE.

This sequence belongs to the UPF0147 family.

This Methanothermobacter thermautotrophicus (strain ATCC 29096 / DSM 1053 / JCM 10044 / NBRC 100330 / Delta H) (Methanobacterium thermoautotrophicum) protein is UPF0147 protein MTH_1407.